Here is a 372-residue protein sequence, read N- to C-terminus: Homeobox protein Nkx-2.1 (372 aa).

A DNA-binding region (homeobox) is located at residues 161–220 (RRKRRVLFSQAQVYELERRFKQQKYLSAPEREHLASMIHLTPTQVKIWFQNHRYKMKRQA). Disordered regions lie at residues 219-258 (QAKD…SPRR), 269-288 (KPCQ…SHAQ), and 312-340 (AGLG…SPAG). Residues 233 to 244 (SGGGGGGGGGAG) are compositionally biased toward gly residues. The segment covering 245 to 254 (CPQQQQAQQQ) has biased composition (low complexity). A Phosphoserine modification is found at serine 255. Over residues 273–288 (AGAPAPGAASLQSHAQ) the composition is skewed to low complexity.

This sequence belongs to the NK-2 homeobox family. Interacts with WWTR1. Post-translationally, phosphorylated on serine residues by STK3/MST2. Thyroid, lung and brain.

The protein localises to the nucleus. Its function is as follows. Transcription factor that binds and activates the promoter of thyroid specific genes such as thyroglobulin, thyroperoxidase, and thyrotropin receptor. Crucial in the maintenance of the thyroid differentiation phenotype. May play a role in lung development and surfactant homeostasis. Forms a regulatory loop with GRHL2 that coordinates lung epithelial cell morphogenesis and differentiation. Activates the transcription of GNRHR and plays a role in enhancing the circadian oscillation of its gene expression. Represses the transcription of the circadian transcriptional repressor NR1D1. This chain is Homeobox protein Nkx-2.1, found in Mus musculus (Mouse).